A 241-amino-acid polypeptide reads, in one-letter code: MAVASKVTVIVVAAGKGKRMGRSYNKQYIMLENKPILYHTLAVFEKHSEINEIILVVASGEEEYCQGQIIKKYGLKKVRKVVAGGSERRNSVKNGLEELEEACEVVLVHDGARPFITKEVITKSIEVAYEEGAVIVAVPVKDTIKRVNEKMEVVETPERQQLWAVQTPQVFRSGILKRAYKEAEDFERVGTDDAVLVEAAGYTVKVVLGIYENIKVTTPEDLIIGQGILNQRKDGEQCEWE.

It belongs to the IspD/TarI cytidylyltransferase family. IspD subfamily.

It catalyses the reaction 2-C-methyl-D-erythritol 4-phosphate + CTP + H(+) = 4-CDP-2-C-methyl-D-erythritol + diphosphate. Its pathway is isoprenoid biosynthesis; isopentenyl diphosphate biosynthesis via DXP pathway; isopentenyl diphosphate from 1-deoxy-D-xylulose 5-phosphate: step 2/6. Functionally, catalyzes the formation of 4-diphosphocytidyl-2-C-methyl-D-erythritol from CTP and 2-C-methyl-D-erythritol 4-phosphate (MEP). The chain is 2-C-methyl-D-erythritol 4-phosphate cytidylyltransferase from Alkaliphilus metalliredigens (strain QYMF).